The primary structure comprises 363 residues: 3-dehydroquinate synthase (363 aa).

Residues 74 to 79, 108 to 112, 132 to 133, K145, K154, and 172 to 175 contribute to the NAD(+) site; these read DGEQYK, GVIGD, TT, and CLKT. E187, H250, and H267 together coordinate Zn(2+).

It belongs to the sugar phosphate cyclases superfamily. Dehydroquinate synthase family. Requires NAD(+) as cofactor. The cofactor is Co(2+). Zn(2+) serves as cofactor.

The protein localises to the cytoplasm. The enzyme catalyses 7-phospho-2-dehydro-3-deoxy-D-arabino-heptonate = 3-dehydroquinate + phosphate. Its pathway is metabolic intermediate biosynthesis; chorismate biosynthesis; chorismate from D-erythrose 4-phosphate and phosphoenolpyruvate: step 2/7. Catalyzes the conversion of 3-deoxy-D-arabino-heptulosonate 7-phosphate (DAHP) to dehydroquinate (DHQ). The polypeptide is 3-dehydroquinate synthase (Buchnera aphidicola subsp. Acyrthosiphon pisum (strain APS) (Acyrthosiphon pisum symbiotic bacterium)).